A 1787-amino-acid chain; its full sequence is ATP-dependent RNA helicase DEAH11, chloroplastic (1787 aa).

A chloroplast-targeting transit peptide spans 1–33; sequence MRNSFPPSDGGRSTTDRRQQSFPSSSTNRYNSR. The segment at 1-75 is disordered; it reads MRNSFPPSDG…DRAPSSGFSP (75 aa). Positions 20 to 60 are enriched in polar residues; sequence QSFPSSSTNRYNSRSAQSSPPLNHCTTWNQQHSQYHNTNFP. Positions 313–477 constitute a Helicase ATP-binding domain; sequence LKKIHCEQIM…LFDCGILHVN (165 aa). Residue 326 to 333 participates in ATP binding; the sequence is GETGSGKS. Residues 424–427 carry the DEAH box motif; sequence DEAH. Residues 507-673 enclose the Helicase C-terminal domain; it reads DVVKMAVEIH…VALLRMLALG (167 aa). The segment at 1557-1764 is TRIAD supradomain; sequence IELECPICLS…EPCYAHLRTI (208 aa). Residues Cys1561, Cys1564, Cys1577, His1579, Cys1582, Cys1585, Cys1604, Cys1609, Cys1649, Cys1654, Cys1672, Cys1675, Cys1680, Cys1683, His1688, Cys1693, Cys1719, and Cys1722 each contribute to the Zn(2+) site. The RING-type 1 zinc finger occupies 1561–1609; it reads CPICLSEVDDGYSLEGCSHLFCKACLLEQFEASMRNFDAFPILCSHIDC. An IBR-type zinc finger spans residues 1628-1693; that stretch reads DELISASLSA…HLEYHPLITC (66 aa). An RING-type 2; atypical zinc finger spans residues 1719-1747; sequence CPICKSTIEKTDGCNHLQCRCGKHICWTC. The active site involves Cys1732. 2 residues coordinate Zn(2+): Cys1737 and Cys1739.

The protein belongs to the DEAD box helicase family. DEAH subfamily.

The protein localises to the plastid. The protein resides in the chloroplast. The catalysed reaction is ATP + H2O = ADP + phosphate + H(+). The sequence is that of ATP-dependent RNA helicase DEAH11, chloroplastic from Arabidopsis thaliana (Mouse-ear cress).